The following is a 531-amino-acid chain: Basal body-orientation factor 1 (531 aa).

The segment covering 1–19 (MPKLKVKAGKGKKGKRKKA) has biased composition (basic residues). A disordered region spans residues 1–32 (MPKLKVKAGKGKKGKRKKAGKNEHRLDKESEV). Over residues 20-32 (GKNEHRLDKESEV) the composition is skewed to basic and acidic residues. 2 coiled-coil regions span residues 26–213 (LDKE…AEKA) and 274–365 (VQEK…VESF). The interval 465-505 (QSRKSPGLKPSPPADVSSIKEKEINTSNLEEKPEESSSTFI) is disordered. Positions 482-499 (SIKEKEINTSNLEEKPEE) are enriched in basic and acidic residues.

The protein belongs to the BBOF1 family. In terms of tissue distribution, multiciliated cells.

It localises to the cytoplasm. The protein localises to the cytoskeleton. It is found in the cilium basal body. Its function is as follows. Basal body protein required in multiciliate cells to align and maintain cilia orientation in response to flow. May act by mediating a maturation step that stabilizes and aligns cilia orientation. Not required to respond to planar cell polarity (PCP) or flow-based orientation cues. The polypeptide is Basal body-orientation factor 1 (ccdc176) (Xenopus laevis (African clawed frog)).